Here is a 76-residue protein sequence, read N- to C-terminus: Conotoxin Cal29b (76 aa).

The signal sequence occupies residues 1-43; it reads MKLTCVLIVAVLILAACQFTAANMARYGKTQIARSDVKSIDAR.

Belongs to the conotoxin O1 superfamily. Post-translationally, may contain 4 disulfide bonds. Expressed by the venom duct.

The protein localises to the secreted. In terms of biological role, is able to inhibit the growth of Mycobacterium tuberculosis (MIC=0.22-3.52 uM against strain H37Rv and 2 multidrug-resistant strains). May also show neurotoxic activity. This chain is Conotoxin Cal29b, found in Californiconus californicus (California cone).